A 1637-amino-acid chain; its full sequence is Probable serine/threonine-protein kinase gdt2 (1637 aa).

Residues 1 to 19 form the signal peptide; the sequence is MNYILYILLILIIFSINNT. The Extracellular segment spans residues 20-896; the sequence is FSIGSFVYTP…IPVEKINLLP (877 aa). Residues 897-917 form a helical membrane-spanning segment; the sequence is IIVPICVTVLVLLSILIVFFG. Residues 918-1637 are Cytoplasmic-facing; it reads ARYYKHKKRR…NNNNNNNNNN (720 aa). The segment covering 977-990 has biased composition (polar residues); sequence SDIQTQSENNNLEP. The tract at residues 977–1000 is disordered; it reads SDIQTQSENNNLEPTTVETTTTTT. Positions 991–1000 are enriched in low complexity; it reads TTVETTTTTT. Residues 1290–1547 form the Protein kinase domain; the sequence is IIIKNYISEG…LSKYLKHLLK (258 aa). ATP is bound by residues 1296–1304 and Lys1317; that span reads ISEGTFGIV. Catalysis depends on Asp1408, which acts as the Proton acceptor. Residues 1557–1637 form a disordered region; it reads DKDKKNKKKN…NNNNNNNNNN (81 aa). Composition is skewed to low complexity over residues 1568 to 1589 and 1597 to 1637; these read NNNNNNNNNNNNNNNNNNNNNN and NNNI…NNNN.

In the N-terminal section; belongs to the GDT family. It in the C-terminal section; belongs to the protein kinase superfamily. TKL Ser/Thr protein kinase family.

It is found in the membrane. The enzyme catalyses L-seryl-[protein] + ATP = O-phospho-L-seryl-[protein] + ADP + H(+). The catalysed reaction is L-threonyl-[protein] + ATP = O-phospho-L-threonyl-[protein] + ADP + H(+). Regulates the transition between growth and differentiation. This chain is Probable serine/threonine-protein kinase gdt2 (gdt2), found in Dictyostelium discoideum (Social amoeba).